We begin with the raw amino-acid sequence, 263 residues long: Phosphatidylglycerol--prolipoprotein diacylglyceryl transferase (263 aa).

4 helical membrane passes run 16–36 (LAVS…WFYA), 55–75 (FVTY…ILLY), 92–112 (EGGM…YIFC), and 117–137 (LNFL…LFFG). Arg-138 provides a ligand contact to a 1,2-diacyl-sn-glycero-3-phospho-(1'-sn-glycerol). 3 helical membrane-spanning segments follow: residues 172–192 (QLYE…YAVF), 201–221 (GLNS…IEIF), and 234–254 (SLTM…YLII).

The protein belongs to the Lgt family.

Its subcellular location is the cell inner membrane. It carries out the reaction L-cysteinyl-[prolipoprotein] + a 1,2-diacyl-sn-glycero-3-phospho-(1'-sn-glycerol) = an S-1,2-diacyl-sn-glyceryl-L-cysteinyl-[prolipoprotein] + sn-glycerol 1-phosphate + H(+). Its pathway is protein modification; lipoprotein biosynthesis (diacylglyceryl transfer). Functionally, catalyzes the transfer of the diacylglyceryl group from phosphatidylglycerol to the sulfhydryl group of the N-terminal cysteine of a prolipoprotein, the first step in the formation of mature lipoproteins. This is Phosphatidylglycerol--prolipoprotein diacylglyceryl transferase from Rickettsia bellii (strain OSU 85-389).